The chain runs to 81 residues: Trefoil factor 1 (81 aa).

Residues 1 to 23 (MEHRVIYVLVLVCALTLSSLAQG) form the signal peptide. A P-type domain is found at 26–69 (ETCTVAPHHRDNCGSPGITPSQCKDKGCCFDNTVRGVPWCYYPV). 3 disulfide bridges follow: Cys-28–Cys-54, Cys-38–Cys-53, and Cys-48–Cys-65.

It localises to the secreted. In terms of biological role, stabilizer of the mucous gel overlying the gastrointestinal mucosa that provides a physical barrier against various noxious agents. The polypeptide is Trefoil factor 1 (TFF1) (Canis lupus familiaris (Dog)).